We begin with the raw amino-acid sequence, 101 residues long: NADH-quinone oxidoreductase subunit K (101 aa).

The next 3 helical transmembrane spans lie at 4–24, 29–49, and 61–81; these read VYDY…GIML, IILL…NFIA, and VFVF…LAIV.

The protein belongs to the complex I subunit 4L family. In terms of assembly, NDH-1 is composed of 14 different subunits. Subunits NuoA, H, J, K, L, M, N constitute the membrane sector of the complex.

It is found in the cell inner membrane. The catalysed reaction is a quinone + NADH + 5 H(+)(in) = a quinol + NAD(+) + 4 H(+)(out). NDH-1 shuttles electrons from NADH, via FMN and iron-sulfur (Fe-S) centers, to quinones in the respiratory chain. The immediate electron acceptor for the enzyme in this species is believed to be ubiquinone. Couples the redox reaction to proton translocation (for every two electrons transferred, four hydrogen ions are translocated across the cytoplasmic membrane), and thus conserves the redox energy in a proton gradient. This chain is NADH-quinone oxidoreductase subunit K, found in Legionella pneumophila (strain Paris).